A 223-amino-acid chain; its full sequence is Ribonuclease 3 (223 aa).

In terms of domain architecture, RNase III spans 3 to 125 (LERLQKKLGY…IIAAVYLDAG (123 aa)). Glu38 contributes to the Mg(2+) binding site. The active site involves Asp42. Residues Asp111 and Glu114 each contribute to the Mg(2+) site. Residue Glu114 is part of the active site. The region spanning 152 to 222 (DPKTRLQEYL…ALQVIKVLGI (71 aa)) is the DRBM domain.

It belongs to the ribonuclease III family. In terms of assembly, homodimer. The cofactor is Mg(2+).

It localises to the cytoplasm. The catalysed reaction is Endonucleolytic cleavage to 5'-phosphomonoester.. Digests double-stranded RNA. Involved in the processing of primary rRNA transcript to yield the immediate precursors to the large and small rRNAs (23S and 16S). Processes some mRNAs, and tRNAs when they are encoded in the rRNA operon. Processes pre-crRNA and tracrRNA of type II CRISPR loci if present in the organism. This chain is Ribonuclease 3, found in Glaesserella parasuis serovar 5 (strain SH0165) (Haemophilus parasuis).